The chain runs to 516 residues: MNVFFMFSLLFLAALGSCADDRNPLEECFRETDYEEFLEIAKNGLTATSNPKRVVIVGAGMSGLSAAYVLAGAGHQVTVLEASERVGGRVRTYRKEDWYANLGPMRLPTKHRIVREYIKKFGLELNEFFQENDNAWYFIKNIRKRVQEVKNNPGLLKYPVKPSETGKSAGQLYEESLRKVVEELRSTNCKYILDKYDTYSTKEYLLKEGNLSPGAVDMIGDLLNEDSGYYVSFIESLKHDDIFGYEKRFDEIVGGMDQLPTSMYEAIKEKVQVHFNARVIEIQQNDREATVTYQTSANEMSSVTADYVIVCTTSRAARRIKFEPPLPPKKAHALRSVHYRSGTKIFLTCTKKFWEDEGIHGGKSTTDLPSRSIYYPNHNFTSGVGVIIAYGIGDDANFFQALDFKDCADIVINDLSLIHQLPKEDIQTFCHPSKIQRWSLDRYAMGGITTFTPYQFQHFSEALTAPFNRIYFAGEYTAQFHGWIDSTIKSGLTAARDVNRASENPSGIHLSNDNEF.

An N-terminal signal peptide occupies residues Met-1 to Cys-18. Cys-28 and Cys-189 form a disulfide bridge. Residues Met-61–Ser-62, Glu-81–Ala-82, Arg-89, and Gly-103–Arg-106 each bind FAD. Substrate contacts are provided by Arg-106 and His-239. Residue Val-279 coordinates FAD. Cys-349 and Cys-430 are joined by a disulfide. N-linked (GlcNAc...) asparagine glycosylation is present at Asn-379. Tyr-390 contributes to the substrate binding site. FAD contacts are provided by residues Glu-475 and Gly-482 to Thr-487. A substrate-binding site is contributed by Gly-482–Trp-483.

This sequence belongs to the flavin monoamine oxidase family. FIG1 subfamily. Homodimer; non-covalently linked. Requires FAD as cofactor. Post-translationally, N-glycosylated. As to expression, expressed by the venom gland.

The protein resides in the secreted. The enzyme catalyses an L-alpha-amino acid + O2 + H2O = a 2-oxocarboxylate + H2O2 + NH4(+). Its function is as follows. Catalyzes an oxidative deamination of predominantly hydrophobic and aromatic L-amino acids, thus producing hydrogen peroxide that may contribute to the diverse toxic effects of this enzyme. Exhibits diverse biological activities, such as hemorrhage, hemolysis, edema, apoptosis of vascular endothelial cells or tumor cell lines, antibacterial and antiparasitic activities, as well as regulation of platelet aggregation. Effects of snake L-amino oxidases on platelets are controversial, since they either induce aggregation or inhibit agonist-induced aggregation. These different effects are probably due to different experimental conditions. This Sistrurus catenatus edwardsii (Desert massasauga) protein is L-amino-acid oxidase.